A 142-amino-acid chain; its full sequence is VSLTDEEKHLIQHIWSNVNVVEITAKALERVFYVYPWTTRLFTSFNHNFKASDKGVHDHAVNVSKALSAAIGDLHNVNKNFSALSTKHQKKLGVDTSNFMLLGQAFLVELAAFEKDKFTPQYHKAALKLFEVVTEALSCQYH.

The region spanning 2 to 142 is the Globin domain; sequence SLTDEEKHLI…VTEALSCQYH (141 aa). Residues histidine 59 and histidine 88 each contribute to the heme b site.

The protein belongs to the globin family. Heterotetramer of two alpha chains and two beta chains. In terms of tissue distribution, red blood cells.

In terms of biological role, involved in oxygen transport from the lung to the various peripheral tissues. The polypeptide is Hemoglobin subunit beta-2 (HBB2) (Torpedo marmorata (Marbled electric ray)).